The following is a 594-amino-acid chain: Pentatricopeptide repeat-containing protein At1g15480, mitochondrial (594 aa).

The N-terminal 67 residues, 1–67 (MFALSKVLRR…WSSSTGRRSL (67 aa)), are a transit peptide targeting the mitochondrion. The span at 62–75 (TGRRSLSSDAGAKT) shows a compositional bias: low complexity. The segment at 62 to 109 (TGRRSLSSDAGAKTTGDDDDLEDKNVDLATPDETSSDSEDGEEFSGDE) is disordered. Over residues 95-109 (TSSDSEDGEEFSGDE) the composition is skewed to acidic residues. PPR repeat units lie at residues 226–260 (GELVYRTLLANHVATSNVRTAEAVFNKMKDLGFPL), 261–294 (STFTCNQMLILYKRVDKKKIADVLLLLEKENLKP), 295–329 (NLNTYKILIDTKGSSNDITGMEQIVETMKSEGVEL), 330–364 (DLRARALIARHYASAGLKEKAEKVLKEMEGESLEE), 432–466 (SSNVYSVLLRVYVDHKMVSEGKDLVKQMSDSGCNI), 467–502 (GALTWDAVIKLYVEAGEVEKAESSLSKAIQSKQIKP), and 503–537 (LMSSFMYLMHEYVRRGDVHNTEKIFQRMKQAGYQS).

This sequence belongs to the PPR family. P subfamily.

It localises to the mitochondrion. In Arabidopsis thaliana (Mouse-ear cress), this protein is Pentatricopeptide repeat-containing protein At1g15480, mitochondrial.